The primary structure comprises 213 residues: MRPDIADLRKSYEQGELDEAHSAADPLQQFEQWLDQALKAKLPEPNAMTLATVGADGRPSTRVVLIKGCDARGIVWYTNYESRKGRELAAHPFAALQFHWVDLERVVRIEGRVEKVSDTESDAYYRSRPLDSRLGAWASPQSQVIASRAVLVANAAKVGAQFLLNPPRPPHWGGFRLRPDRWEFWQGRKSRLHDRLRYTQQPTGGWLRERLAP.

Residues 9–12 (RKSY) and Lys-67 contribute to the substrate site. Residues 62–67 (RVVLIK), 77–78 (YT), Arg-83, and Lys-84 contribute to the FMN site. Positions 124, 128, and 132 each coordinate substrate. FMN contacts are provided by residues 141-142 (QS) and Trp-185. Residue 191 to 193 (RLH) participates in substrate binding. Position 195 (Arg-195) interacts with FMN.

It belongs to the pyridoxamine 5'-phosphate oxidase family. In terms of assembly, homodimer. FMN serves as cofactor.

The catalysed reaction is pyridoxamine 5'-phosphate + O2 + H2O = pyridoxal 5'-phosphate + H2O2 + NH4(+). It carries out the reaction pyridoxine 5'-phosphate + O2 = pyridoxal 5'-phosphate + H2O2. It functions in the pathway cofactor metabolism; pyridoxal 5'-phosphate salvage; pyridoxal 5'-phosphate from pyridoxamine 5'-phosphate: step 1/1. Its pathway is cofactor metabolism; pyridoxal 5'-phosphate salvage; pyridoxal 5'-phosphate from pyridoxine 5'-phosphate: step 1/1. In terms of biological role, catalyzes the oxidation of either pyridoxine 5'-phosphate (PNP) or pyridoxamine 5'-phosphate (PMP) into pyridoxal 5'-phosphate (PLP). This Methylibium petroleiphilum (strain ATCC BAA-1232 / LMG 22953 / PM1) protein is Pyridoxine/pyridoxamine 5'-phosphate oxidase.